The following is a 535-amino-acid chain: Flavonoid 3'-monooxygenase CYP75B4 (535 aa).

Residues isoleucine 8–valine 28 traverse the membrane as a helical segment. Residue cysteine 469 coordinates heme.

This sequence belongs to the cytochrome P450 family. It depends on heme as a cofactor.

It is found in the membrane. It carries out the reaction a 3'-unsubstituted flavone + reduced [NADPH--hemoprotein reductase] + O2 = a 3'-hydroxyflavone + oxidized [NADPH--hemoprotein reductase] + H2O + H(+). The protein operates within secondary metabolite biosynthesis; flavonoid biosynthesis. In terms of biological role, catalyzes the 3'-hydroxylation of the flavonoid B-ring to the 3',4'-hydroxylated state. Catalyzes in vitro 3'-hydroxylation of different flavonoids. Catalyzes the conversion of apigenin to luteolin, naringenin to eriodictyol, and kaempferol to quercetin. Possesses specific 5'-hydroxylase activity toward chrysoeriol (a 3'-methoxylated flavone) and is indispensable for tricin formation. Converts chrysoeriol to selgin, a precursor of tricin, suggesting that chrysoeriol, instead of tricetin, is an intermediate in tricin biosynthesis. This is Flavonoid 3'-monooxygenase CYP75B4 from Oryza sativa subsp. japonica (Rice).